The sequence spans 444 residues: Glutamate-1-semialdehyde 2,1-aminomutase (444 aa).

Lys-278 is subject to N6-(pyridoxal phosphate)lysine.

It belongs to the class-III pyridoxal-phosphate-dependent aminotransferase family. HemL subfamily. Homodimer. Pyridoxal 5'-phosphate is required as a cofactor.

Its subcellular location is the cytoplasm. The catalysed reaction is (S)-4-amino-5-oxopentanoate = 5-aminolevulinate. Its pathway is porphyrin-containing compound metabolism; protoporphyrin-IX biosynthesis; 5-aminolevulinate from L-glutamyl-tRNA(Glu): step 2/2. This chain is Glutamate-1-semialdehyde 2,1-aminomutase, found in Deinococcus radiodurans (strain ATCC 13939 / DSM 20539 / JCM 16871 / CCUG 27074 / LMG 4051 / NBRC 15346 / NCIMB 9279 / VKM B-1422 / R1).